A 221-amino-acid polypeptide reads, in one-letter code: Transmembrane protein 267 (221 aa).

5 consecutive transmembrane segments (helical) span residues 28–48, 57–77, 86–106, 121–141, and 182–204; these read ASAG…LPFI, LFDN…VIGL, VILA…MAGS, LHCS…MWAC, and ISYW…LMYL.

The protein resides in the membrane. This is Transmembrane protein 267 (tmem267) from Danio rerio (Zebrafish).